Here is a 120-residue protein sequence, read N- to C-terminus: Glycine cleavage system H protein (120 aa).

The Lipoyl-binding domain maps to 19–101; it reads DGTVGISDFA…YTDGWLFRLD (83 aa). Lys60 carries the N6-lipoyllysine modification.

It belongs to the GcvH family. The glycine cleavage system is composed of four proteins: P, T, L and H. (R)-lipoate is required as a cofactor.

The glycine cleavage system catalyzes the degradation of glycine. The H protein shuttles the methylamine group of glycine from the P protein to the T protein. This chain is Glycine cleavage system H protein, found in Deinococcus geothermalis (strain DSM 11300 / CIP 105573 / AG-3a).